We begin with the raw amino-acid sequence, 157 residues long: SsrA-binding protein (157 aa).

Residues 128 to 157 form a disordered region; it reads LARGKKQHDKRAAEKERDWEREKQRVMRRG. Basic and acidic residues predominate over residues 137-157; sequence KRAAEKERDWEREKQRVMRRG.

It belongs to the SmpB family.

It localises to the cytoplasm. Its function is as follows. Required for rescue of stalled ribosomes mediated by trans-translation. Binds to transfer-messenger RNA (tmRNA), required for stable association of tmRNA with ribosomes. tmRNA and SmpB together mimic tRNA shape, replacing the anticodon stem-loop with SmpB. tmRNA is encoded by the ssrA gene; the 2 termini fold to resemble tRNA(Ala) and it encodes a 'tag peptide', a short internal open reading frame. During trans-translation Ala-aminoacylated tmRNA acts like a tRNA, entering the A-site of stalled ribosomes, displacing the stalled mRNA. The ribosome then switches to translate the ORF on the tmRNA; the nascent peptide is terminated with the 'tag peptide' encoded by the tmRNA and targeted for degradation. The ribosome is freed to recommence translation, which seems to be the essential function of trans-translation. This Methylococcus capsulatus (strain ATCC 33009 / NCIMB 11132 / Bath) protein is SsrA-binding protein.